The sequence spans 191 residues: dTTP/UTP pyrophosphatase (191 aa).

Aspartate 71 functions as the Proton acceptor in the catalytic mechanism.

It belongs to the Maf family. YhdE subfamily. A divalent metal cation serves as cofactor.

The protein localises to the cytoplasm. The enzyme catalyses dTTP + H2O = dTMP + diphosphate + H(+). It catalyses the reaction UTP + H2O = UMP + diphosphate + H(+). In terms of biological role, nucleoside triphosphate pyrophosphatase that hydrolyzes dTTP and UTP. May have a dual role in cell division arrest and in preventing the incorporation of modified nucleotides into cellular nucleic acids. This is dTTP/UTP pyrophosphatase from Hyphomonas neptunium (strain ATCC 15444).